Consider the following 125-residue polypeptide: Histone H1-like protein HC1 (125 aa).

This sequence belongs to the histone H1/H5 family. HCT subfamily.

Its function is as follows. Might have a role analogous to that of eukaryotic histone proteins. The sequence is that of Histone H1-like protein HC1 (hctA) from Chlamydia muridarum (strain MoPn / Nigg).